Here is a 348-residue protein sequence, read N- to C-terminus: Dihydroorotase (348 aa).

Zn(2+) is bound by residues His14 and His16. Residues 16-18 (HLR) and Asn42 contribute to the substrate site. The Zn(2+) site is built by Lys100, His137, and His175. Lys100 carries the post-translational modification N6-carboxylysine. Position 137 (His137) interacts with substrate. Leu220 contacts substrate. Residue Asp248 participates in Zn(2+) binding. Residue Asp248 is part of the active site. The substrate site is built by His252 and Ala264.

Belongs to the metallo-dependent hydrolases superfamily. DHOase family. Class II DHOase subfamily. As to quaternary structure, homodimer. Zn(2+) serves as cofactor.

The catalysed reaction is (S)-dihydroorotate + H2O = N-carbamoyl-L-aspartate + H(+). Its pathway is pyrimidine metabolism; UMP biosynthesis via de novo pathway; (S)-dihydroorotate from bicarbonate: step 3/3. Its function is as follows. Catalyzes the reversible cyclization of carbamoyl aspartate to dihydroorotate. The protein is Dihydroorotase of Ectopseudomonas mendocina (strain ymp) (Pseudomonas mendocina).